Consider the following 230-residue polypeptide: UPF0702 transmembrane protein YcaP (230 aa).

3 helical membrane passes run 16–36, 48–68, and 75–95; these read FDFLGEVALRSLYTFVLVFLF, MSLFEVLIILTLGSAAGDVAF, and VPVLIVFITLALLYRLVMWLM.

This sequence belongs to the UPF0702 family.

The protein resides in the cell membrane. The protein is UPF0702 transmembrane protein YcaP (ycaP) of Escherichia coli (strain K12).